A 438-amino-acid chain; its full sequence is Xylose isomerase (438 aa).

Active-site residues include His100 and Asp103. Positions 231, 267, 270, 295, 306, 308, and 338 each coordinate Mg(2+).

This sequence belongs to the xylose isomerase family. Homotetramer. The cofactor is Mg(2+).

It localises to the cytoplasm. The catalysed reaction is alpha-D-xylose = alpha-D-xylulofuranose. This is Xylose isomerase from Caldanaerobacter subterraneus subsp. yonseiensis (Thermoanaerobacter yonseiensis).